The sequence spans 172 residues: Adenine phosphoribosyltransferase (172 aa).

It belongs to the purine/pyrimidine phosphoribosyltransferase family. In terms of assembly, homodimer.

The protein resides in the cytoplasm. It catalyses the reaction AMP + diphosphate = 5-phospho-alpha-D-ribose 1-diphosphate + adenine. It functions in the pathway purine metabolism; AMP biosynthesis via salvage pathway; AMP from adenine: step 1/1. Functionally, catalyzes a salvage reaction resulting in the formation of AMP, that is energically less costly than de novo synthesis. This is Adenine phosphoribosyltransferase from Roseiflexus castenholzii (strain DSM 13941 / HLO8).